Reading from the N-terminus, the 420-residue chain is S-adenosylmethionine synthase (420 aa).

Residue histidine 16 participates in ATP binding. Aspartate 18 is a Mg(2+) binding site. Residue glutamate 44 participates in K(+) binding. Residues glutamate 57 and glutamine 100 each coordinate L-methionine. The interval 100–110 (QSPDIAQGVNT) is flexible loop. Residues 175–177 (DGK), 251–252 (KF), aspartate 260, 266–267 (RK), alanine 283, and lysine 287 contribute to the ATP site. Aspartate 260 is an L-methionine binding site. Residue lysine 291 coordinates L-methionine.

Belongs to the AdoMet synthase family. Homotetramer; dimer of dimers. Mg(2+) is required as a cofactor. The cofactor is K(+).

The protein resides in the cytoplasm. It carries out the reaction L-methionine + ATP + H2O = S-adenosyl-L-methionine + phosphate + diphosphate. Its pathway is amino-acid biosynthesis; S-adenosyl-L-methionine biosynthesis; S-adenosyl-L-methionine from L-methionine: step 1/1. Catalyzes the formation of S-adenosylmethionine (AdoMet) from methionine and ATP. The overall synthetic reaction is composed of two sequential steps, AdoMet formation and the subsequent tripolyphosphate hydrolysis which occurs prior to release of AdoMet from the enzyme. In Trichormus variabilis (strain ATCC 29413 / PCC 7937) (Anabaena variabilis), this protein is S-adenosylmethionine synthase.